The sequence spans 1163 residues: Voltage-gated inwardly rectifying potassium channel KCNH2 (1163 aa).

The Cytoplasmic portion of the chain corresponds to 1-405 (MPVRRGHVAP…RIHRWTILHY (405 aa)). The PAS domain occupies 17 to 88 (TIIRKFEGQS…AAQIAQALLG (72 aa)). A PAC domain is found at 92-144 (RKVEIAFYRKDGSCFLCLVDVVPVKNEDGAVIMFILNFEVVMEKDMVGSPAHD). Residues 235 to 286 (VGPASASPVASIPGPHPSPRAQSLNPDASGSSCSLARTRSRESCASVRRASS) are disordered. Phosphoserine is present on residues serine 239 and serine 245. Residues 254-271 (RAQSLNPDASGSSCSLAR) show a composition bias toward polar residues. A phosphoserine mark is found at serine 285, serine 286, serine 322, and serine 353. The chain crosses the membrane as a helical span at residues 406–426 (SPFKAVWDWLILLLVIYTAVF). Topologically, residues 427 to 452 (TPYSAAFLLKETEDGSQAPDCGYACQ) are extracellular. A helical transmembrane segment spans residues 453 to 473 (PLAVVDLLVDIMFIVDILINF). The Cytoplasmic segment spans residues 474–497 (RTTYVNANEEVVSHPGRIAVHYFK). The helical transmembrane segment at 498–518 (GWFLIDMVAAIPFDLLIFGSG) threads the bilayer. The Extracellular segment spans residues 519-522 (SEEL). A helical; Voltage-sensor transmembrane segment spans residues 523–543 (IGLLKTARLLRLVRVARKLDR). Topologically, residues 544–549 (YSEYGA) are cytoplasmic. A helical membrane pass occupies residues 550 to 570 (AVLFLLMCTFALIAHWLACIW). Topologically, residues 571-613 (YAIGNMEQPHMDSHIGWLHNLGDQIGKPYNSSGLGGPSIKDKY) are extracellular. Asparagine 600 carries N-linked (GlcNAc...) asparagine glycosylation. The pore-forming intramembrane region spans 614-634 (VTALYFTFSSLTSVGFGNVSP). The short motif at 626-631 (SVGFGN) is the Selectivity filter element. At 635–640 (NTNSEK) the chain is on the extracellular side. A helical membrane pass occupies residues 641 to 661 (IFSICVMLIGSLMYASIFGNV). At 662–1163 (SAIIQRLYSG…LHRHGSDPGS (502 aa)) the chain is on the cytoplasmic side. A cNMP-binding domain region spans residues 744–844 (PFRGATKGCL…IHRDDLLEVL (101 aa)). 2 positions are modified to phosphoserine: serine 873 and serine 876. Disordered stretches follow at residues 873–992 (SPSS…NPLS), 1015–1043 (ELPR…GDVE), and 1126–1163 (AGAP…DPGS). Residues 885-894 (RQRKRKLSFR) are compositionally biased toward basic residues. The span at 932–943 (GESPSSGPSSPE) shows a compositional bias: low complexity. Arginine 1018 is subject to Omega-N-methylarginine. Residues 1039–1066 (RGDVESRLDALQRQLNRLETRLSADMAT) are a coiled coil. Residue serine 1141 is modified to Phosphoserine.

This sequence belongs to the potassium channel family. H (Eag) (TC 1.A.1.20) subfamily. Kv11.1/KCNH2 sub-subfamily. As to quaternary structure, the potassium channel is probably composed of a homo- or heterotetrameric complex of pore-forming alpha subunits that can associate with modulating beta subunits. Interacts with DNAJB12 and DNAJB14; chaperones DNAJB12 and DNAJB14 promote tetramerization. Heteromultimer with KCNH6/ERG2 and KCNH7/ERG3. Interacts with ALG10B. Forms a stable complex with KCNE1 or KCNE2, and that this heteromultimerization regulates Inward rectifier potassium channel activity. Interacts with CANX. The core-glycosylated, but not the fully glycosylated form interacts with RNF207. Interacts with NDFIP1 and NDFIP2; this interaction decreases the cell membrane expression by targeting KCNH2, through interaction with NEDD4L, for the degradation through the multivesicular bodies (MVBs)-lysosomal pathway. Post-translationally, phosphorylated on serine and threonine residues. Phosphorylation by PKA inhibits ion conduction. As to expression, highly expressed in brain and testis, slightly less so in heart, adrenal, retina and thymus. Detected at lower levels in lung, soleus, tibialis, and at very low levels in cornea and lens. A shorter transcript is detected in skeletal muscle. Found in pituitary.

It is found in the cell membrane. The catalysed reaction is K(+)(in) = K(+)(out). Its function is as follows. Pore-forming (alpha) subunit of voltage-gated inwardly rectifying potassium channel. Characterized by unusual gating kinetics by producing relatively small outward currents during membrane depolarization and large inward currents during subsequent repolarization which reflect a rapid inactivation during depolarization and quick recovery from inactivation but slow deactivation (closing) during repolarization. Channel properties are modulated by cAMP and subunit assembly. Forms a stable complex with KCNE1 or KCNE2, and that this heteromultimerization regulates inward rectifier potassium channel activity. The chain is Voltage-gated inwardly rectifying potassium channel KCNH2 from Rattus norvegicus (Rat).